The primary structure comprises 426 residues: C4-dicarboxylate transport protein (426 aa).

The next 8 membrane-spanning stretches (helical) occupy residues 8-28 (VLYVQVIVAIIIGIALGHFYP), 44-64 (LIKMVIGPIIFCTVVTGIAGM), 78-98 (LLYFEIVSTFALILGLAATHL), 148-168 (GEILQILLIALLFGAVLAHVG), 184-204 (ILFGMVGIITKLAPIGAFGAM), 222-242 (LIGTFYLTSIVFVVVVLGFIA), 297-317 (GYSFNLDGTNIYMTMAVLFIA), and 355-375 (AATLAVVPTIPLSGMVLILGI).

Belongs to the dicarboxylate/amino acid:cation symporter (DAACS) (TC 2.A.23) family.

It is found in the cell inner membrane. Responsible for the transport of dicarboxylates such as succinate, fumarate, and malate from the periplasm across the membrane. The polypeptide is C4-dicarboxylate transport protein (Paraburkholderia phymatum (strain DSM 17167 / CIP 108236 / LMG 21445 / STM815) (Burkholderia phymatum)).